A 20-amino-acid chain; its full sequence is Cytochrome c oxidase subunit 6A2, mitochondrial (20 aa).

The tract at residues 1 to 20 is disordered; that stretch reads ASGAKGDHGGAGASTXXLLT.

This sequence belongs to the cytochrome c oxidase subunit 6A family. In terms of assembly, component of the cytochrome c oxidase (complex IV, CIV), a multisubunit enzyme composed of 14 subunits. The complex is composed of a catalytic core of 3 subunits MT-CO1, MT-CO2 and MT-CO3, encoded in the mitochondrial DNA, and 11 supernumerary subunits COX4I, COX5A, COX5B, COX6A, COX6B, COX6C, COX7A, COX7B, COX7C, COX8 and NDUFA4, which are encoded in the nuclear genome. The complex exists as a monomer or a dimer and forms supercomplexes (SCs) in the inner mitochondrial membrane with NADH-ubiquinone oxidoreductase (complex I, CI) and ubiquinol-cytochrome c oxidoreductase (cytochrome b-c1 complex, complex III, CIII), resulting in different assemblies (supercomplex SCI(1)III(2)IV(1) and megacomplex MCI(2)III(2)IV(2)). As to expression, heart specific isoform.

It localises to the mitochondrion inner membrane. Its pathway is energy metabolism; oxidative phosphorylation. Component of the cytochrome c oxidase, the last enzyme in the mitochondrial electron transport chain which drives oxidative phosphorylation. The respiratory chain contains 3 multisubunit complexes succinate dehydrogenase (complex II, CII), ubiquinol-cytochrome c oxidoreductase (cytochrome b-c1 complex, complex III, CIII) and cytochrome c oxidase (complex IV, CIV), that cooperate to transfer electrons derived from NADH and succinate to molecular oxygen, creating an electrochemical gradient over the inner membrane that drives transmembrane transport and the ATP synthase. Cytochrome c oxidase is the component of the respiratory chain that catalyzes the reduction of oxygen to water. Electrons originating from reduced cytochrome c in the intermembrane space (IMS) are transferred via the dinuclear copper A center (CU(A)) of subunit 2 and heme A of subunit 1 to the active site in subunit 1, a binuclear center (BNC) formed by heme A3 and copper B (CU(B)). The BNC reduces molecular oxygen to 2 water molecules unsing 4 electrons from cytochrome c in the IMS and 4 protons from the mitochondrial matrix. Plays a role in the assembly and stabilization of complex IV. The sequence is that of Cytochrome c oxidase subunit 6A2, mitochondrial (COX6A2) from Canis lupus familiaris (Dog).